Consider the following 756-residue polypeptide: Polyribonucleotide nucleotidyltransferase (756 aa).

Residues Asp-527 and Asp-533 each coordinate Mg(2+). The 60-residue stretch at 593–652 (PRITTIKVPVDKIGEVIGPKGKMINSITEETGASISIEDDGTVFVGASNGEAAQAAIDKI) folds into the KH domain. The S1 motif domain occupies 664–733 (GERFLGTVVK…NRGKISLVLV (70 aa)).

This sequence belongs to the polyribonucleotide nucleotidyltransferase family. It depends on Mg(2+) as a cofactor.

The protein localises to the cytoplasm. The catalysed reaction is RNA(n+1) + phosphate = RNA(n) + a ribonucleoside 5'-diphosphate. Its function is as follows. Involved in mRNA degradation. Catalyzes the phosphorolysis of single-stranded polyribonucleotides processively in the 3'- to 5'-direction. The sequence is that of Polyribonucleotide nucleotidyltransferase from Mycolicibacterium gilvum (strain PYR-GCK) (Mycobacterium gilvum (strain PYR-GCK)).